The primary structure comprises 1205 residues: Chromosome partition protein Smc (1205 aa).

32-39 contacts ATP; it reads PNGSGKSN. 2 coiled-coil regions span residues 169 to 288 and 330 to 499; these read KHRK…SIQH and EELE…GLQR. Residues 514-628 enclose the SMC hinge domain; it reads GLFGSIAQLV…VNDLTEAMGL (115 aa). Coiled coils occupy residues 661-771, 802-836, and 979-1033; these read LEVT…AQET, AVRT…RAQQ, and DRVT…KDLL.

It belongs to the SMC family. Homodimer.

It localises to the cytoplasm. Required for chromosome condensation and partitioning. The chain is Chromosome partition protein Smc from Mycobacterium tuberculosis (strain ATCC 25618 / H37Rv).